An 84-amino-acid chain; its full sequence is Small ribosomal subunit protein bS18 (84 aa).

Belongs to the bacterial ribosomal protein bS18 family. Part of the 30S ribosomal subunit. Forms a tight heterodimer with protein bS6.

Its function is as follows. Binds as a heterodimer with protein bS6 to the central domain of the 16S rRNA, where it helps stabilize the platform of the 30S subunit. The protein is Small ribosomal subunit protein bS18 of Dictyoglomus turgidum (strain DSM 6724 / Z-1310).